Reading from the N-terminus, the 108-residue chain is Thiosulfate sulfurtransferase GlpE (108 aa).

The Rhodanese domain occupies 18 to 106 (ENEGATLADI…WERSGLPIET (89 aa)). Catalysis depends on Cys-66, which acts as the Cysteine persulfide intermediate.

This sequence belongs to the GlpE family.

It localises to the cytoplasm. It carries out the reaction thiosulfate + hydrogen cyanide = thiocyanate + sulfite + 2 H(+). The catalysed reaction is thiosulfate + [thioredoxin]-dithiol = [thioredoxin]-disulfide + hydrogen sulfide + sulfite + 2 H(+). Functionally, transferase that catalyzes the transfer of sulfur from thiosulfate to thiophilic acceptors such as cyanide or dithiols. May function in a CysM-independent thiosulfate assimilation pathway by catalyzing the conversion of thiosulfate to sulfite, which can then be used for L-cysteine biosynthesis. The sequence is that of Thiosulfate sulfurtransferase GlpE from Actinobacillus pleuropneumoniae serotype 7 (strain AP76).